The following is a 469-amino-acid chain: 24-hydroxycholesterol 7-alpha-hydroxylase (469 aa).

The signal sequence occupies residues 1–23 (MELISPTVIIILGCLALFLLLQR). Transmembrane regions (helical) follow at residues 267-287 (GLLLLWASLSNAVPVAFWTLA), 352-372 (VEILNYIIPSGDLLMLSPFWL), and 412-432 (FQCPARWFALLEVQMCIILIL). C414 contacts heme.

The protein belongs to the cytochrome P450 family. Requires heme as cofactor. Liver specific.

It is found in the endoplasmic reticulum membrane. Its subcellular location is the microsome membrane. The enzyme catalyses (24S)-hydroxycholesterol + reduced [NADPH--hemoprotein reductase] + O2 = (24S)-7alpha-dihydroxycholesterol + oxidized [NADPH--hemoprotein reductase] + H2O + H(+). The protein operates within steroid metabolism; cholesterol degradation. Its pathway is lipid metabolism; bile acid biosynthesis. Functionally, a cytochrome P450 monooxygenase involved in neural cholesterol clearance through bile acid synthesis. Catalyzes 7-alpha hydroxylation of (24S)-hydroxycholesterol, a neural oxysterol that is metabolized to bile acids in the liver. Mechanistically, uses molecular oxygen inserting one oxygen atom into a substrate, and reducing the second into a water molecule, with two electrons provided by NADPH via cytochrome P450 reductase (CPR; NADPH-ferrihemoprotein reductase). This chain is 24-hydroxycholesterol 7-alpha-hydroxylase, found in Homo sapiens (Human).